The sequence spans 744 residues: Potassium-transporting ATPase ATP-binding subunit (744 aa).

4 helical membrane passes run 80–100, 108–128, 265–285, and 310–330; these read PVMFVVYIGSILTTLLWVMAL, AGFILAVSVWLWFTVLFANVA, LALTILLVSLTIILLLATVTL, and VLVALLVCLIPTTIGGLLSAI. Asp363 serves as the catalytic 4-aspartylphosphate intermediate. Residues Asp400, Glu404, 435–442, and Lys457 contribute to the ATP site; that span reads FSAQTRMS. The Mg(2+) site is built by Asp580 and Asp584. 3 helical membrane passes run 650-670, 678-698, and 724-744; these read FAIIPAAFATTYPQLAALNVM, AVMSAVIFNALIIVFLIPLAL, and LLLPFPGIKLIDMFLAAMGWV.

The protein belongs to the cation transport ATPase (P-type) (TC 3.A.3) family. Type IA subfamily. In terms of assembly, the system is composed of three essential subunits: KdpA, KdpB and KdpC.

It is found in the cell inner membrane. It catalyses the reaction K(+)(out) + ATP + H2O = K(+)(in) + ADP + phosphate + H(+). Functionally, part of the high-affinity ATP-driven potassium transport (or Kdp) system, which catalyzes the hydrolysis of ATP coupled with the electrogenic transport of potassium into the cytoplasm. This subunit is responsible for energy coupling to the transport system and for the release of the potassium ions to the cytoplasm. This is Potassium-transporting ATPase ATP-binding subunit from Ralstonia nicotianae (strain ATCC BAA-1114 / GMI1000) (Ralstonia solanacearum).